A 491-amino-acid polypeptide reads, in one-letter code: Glutamyl-tRNA(Gln) amidotransferase subunit A (491 aa).

Residues lysine 79 and serine 154 each act as charge relay system in the active site. Serine 178 (acyl-ester intermediate) is an active-site residue.

The protein belongs to the amidase family. GatA subfamily. In terms of assembly, heterotrimer of A, B and C subunits.

The catalysed reaction is L-glutamyl-tRNA(Gln) + L-glutamine + ATP + H2O = L-glutaminyl-tRNA(Gln) + L-glutamate + ADP + phosphate + H(+). Allows the formation of correctly charged Gln-tRNA(Gln) through the transamidation of misacylated Glu-tRNA(Gln) in organisms which lack glutaminyl-tRNA synthetase. The reaction takes place in the presence of glutamine and ATP through an activated gamma-phospho-Glu-tRNA(Gln). The chain is Glutamyl-tRNA(Gln) amidotransferase subunit A from Alkaliphilus metalliredigens (strain QYMF).